A 211-amino-acid chain; its full sequence is Thymidylate kinase (211 aa).

10 to 17 (GVEGCGKT) provides a ligand contact to ATP.

Belongs to the thymidylate kinase family.

It carries out the reaction dTMP + ATP = dTDP + ADP. Phosphorylation of dTMP to form dTDP in both de novo and salvage pathways of dTTP synthesis. The polypeptide is Thymidylate kinase (Nostoc punctiforme (strain ATCC 29133 / PCC 73102)).